Consider the following 377-residue polypeptide: MSNGIVIIGSGFAARQLVKNIRKQDATIPLTLIAADSMDEYNKPDLSHVISQGQRADDLTRQTAGEFAEQFNLHLFPQTWVTDIDAEARVVKSQNNQWQYDKLVLATGASAFVPPVPGRELMLTLNSQQEYRACETQLRDARRVLIVGGGLIGSELAMDFCRAGKAVTLIDNAASILASLMPPEVSSRLQHRLTEMGVHLLLKSQLQGLEKTDSGILATLDRQRSIEVDAVIAATGLRPETALARRAGLTINRGVCVDSYLQTSNADIYALGDCAEINGQVLPFLQPIQLSAMVLAKNLLGNNTPLKLPAMLVKIKTPELPLHLAGETQRQDLRWQINTERQGMVARGVDDADQLRAFVVSEDRMKEAFGLLKTLPM.

The protein belongs to the FAD-dependent oxidoreductase family. FAD is required as a cofactor.

It is found in the cytoplasm. It catalyses the reaction 2 reduced [nitric oxide reductase rubredoxin domain] + NAD(+) + H(+) = 2 oxidized [nitric oxide reductase rubredoxin domain] + NADH. It participates in nitrogen metabolism; nitric oxide reduction. Functionally, one of at least two accessory proteins for anaerobic nitric oxide (NO) reductase. Reduces the rubredoxin moiety of NO reductase. This chain is Nitric oxide reductase FlRd-NAD(+) reductase, found in Escherichia coli (strain 55989 / EAEC).